The following is a 718-amino-acid chain: Ribosomal RNA large subunit methyltransferase K/L (718 aa).

The THUMP domain occupies 43 to 154 (TQYRILLWSR…QDELVVSLDL (112 aa)).

Belongs to the methyltransferase superfamily. RlmKL family.

Its subcellular location is the cytoplasm. The catalysed reaction is guanosine(2445) in 23S rRNA + S-adenosyl-L-methionine = N(2)-methylguanosine(2445) in 23S rRNA + S-adenosyl-L-homocysteine + H(+). It catalyses the reaction guanosine(2069) in 23S rRNA + S-adenosyl-L-methionine = N(2)-methylguanosine(2069) in 23S rRNA + S-adenosyl-L-homocysteine + H(+). In terms of biological role, specifically methylates the guanine in position 2445 (m2G2445) and the guanine in position 2069 (m7G2069) of 23S rRNA. In Histophilus somni (strain 129Pt) (Haemophilus somnus), this protein is Ribosomal RNA large subunit methyltransferase K/L.